The primary structure comprises 397 residues: 1-deoxy-D-xylulose 5-phosphate reductoisomerase (397 aa).

NADPH contacts are provided by Thr12, Gly13, Ser14, Ile15, Gly38, Lys39, Asn40, and Asn126. Residue Lys127 coordinates 1-deoxy-D-xylulose 5-phosphate. Glu128 serves as a coordination point for NADPH. Asp152 is a Mn(2+) binding site. 1-deoxy-D-xylulose 5-phosphate is bound by residues Ser153, Glu154, Ser188, and His211. Glu154 is a binding site for Mn(2+). An NADPH-binding site is contributed by Gly217. 1-deoxy-D-xylulose 5-phosphate-binding residues include Ser224, Asn229, Lys230, and Glu233. Glu233 contacts Mn(2+).

It belongs to the DXR family. It depends on Mg(2+) as a cofactor. Requires Mn(2+) as cofactor.

It carries out the reaction 2-C-methyl-D-erythritol 4-phosphate + NADP(+) = 1-deoxy-D-xylulose 5-phosphate + NADPH + H(+). The protein operates within isoprenoid biosynthesis; isopentenyl diphosphate biosynthesis via DXP pathway; isopentenyl diphosphate from 1-deoxy-D-xylulose 5-phosphate: step 1/6. In terms of biological role, catalyzes the NADPH-dependent rearrangement and reduction of 1-deoxy-D-xylulose-5-phosphate (DXP) to 2-C-methyl-D-erythritol 4-phosphate (MEP). This Haemophilus influenzae (strain PittEE) protein is 1-deoxy-D-xylulose 5-phosphate reductoisomerase.